A 622-amino-acid polypeptide reads, in one-letter code: MSSEHKRSLPAVTLAAIGVVYGDIGTSPLYTLRECLSGQFGFGVEPDSVFGFLSLIFWLLVLVVSLKYLTYVMRADNAGEGGILTLMSLAGRNTSDRMTSVLVIMGLIGGSFFYGEVVITPAISVMSAMEGLEIAAPSMDSYIVPLSIVVLTLLFIIQKHGTGSVGKLFAPVMLIWFLTLGVLGARSIIANPEVLQALNPMYAVRFFIEYKAVSFFALGAVVLAITGVEALYADMGHFGKFPIRLAWFTVVLPSLVLNYFGQGALLLKNPEAIKNPFFLLAPDWALIPLMILATLATIIASQAVISGVFSLTRQAVRLGYLPPMRIVHTSDMESGQIYIPAINWMLYIAVVIVIVSFEHSSNLAAAYGIAVTGTMVITSILFCTVAVKNWLWNRYLAWVLLAGLLVIDVPMFLANVVKILSGGWLPLALGMVMFIIMTTWKSERFRLLRRLHEHGNSLDAMIASLEKSPPTRVPGTAVYFSRATRVIPFALLHNLKHNKILHERVVLLTMRTEDAPYVLNARRVTVEQLSPTFWRVIANYGWRETPDVEEVFQRCWQDGLTCQMMETSFFMSNESLIIGERPWYLRLRGKLFMMLSRNALRAADQFEIPPNRLIELGIQVEI.

The next 12 membrane-spanning stretches (helical) occupy residues 9–29, 49–69, 101–121, 137–157, 165–185, 212–232, 247–267, 279–299, 337–357, 363–383, 397–417, and 419–439; these read LPAV…TSPL, VFGF…LKYL, VLVI…VITP, PSMD…LFII, VGKL…VLGA, AVSF…EALY, WFTV…ALLL, LLAP…ATII, IYIP…IVSF, LAAA…ILFC, AWVL…ANVV, and ILSG…IMTT.

This sequence belongs to the HAK/KUP transporter (TC 2.A.72) family.

The protein localises to the cell inner membrane. It carries out the reaction K(+)(in) + H(+)(in) = K(+)(out) + H(+)(out). Functionally, responsible for the low-affinity transport of potassium into the cell. Likely operates as a K(+):H(+) symporter. The chain is Low affinity potassium transport system protein Kup from Pectobacterium carotovorum subsp. carotovorum (strain PC1).